The chain runs to 722 residues: Polymerase basic protein 2 (722 aa).

As to quaternary structure, the RNA polymerase is composed of three subunits: PB1, PB2 and PA.

Its subcellular location is the virion. The protein resides in the host nucleus. Functionally, involved in transcription initiation and cap-stealing mechanism, in which cellular capped pre-mRNA are used to generate primers for viral transcription. Binds the cap of the target pre-RNA which is subsequently cleaved by PB1. May play a role in genome replication. The sequence is that of Polymerase basic protein 2 from Gadus morhua (Atlantic cod).